We begin with the raw amino-acid sequence, 176 residues long: Cystatin-related protein 2 (176 aa).

Positions 1–26 (MYKTLCGTQLLLAIFVLFLNFSHATA) are cleaved as a signal peptide. Residues 27–30 (KGTR) constitute a propeptide that is removed on maturation. Asn71 carries N-linked (GlcNAc...) asparagine glycosylation. Intrachain disulfides connect Cys129–Cys139 and Cys153–Cys173.

This sequence belongs to the cystatin family. As to expression, prostate.

In Rattus norvegicus (Rat), this protein is Cystatin-related protein 2 (Crp2).